The chain runs to 139 residues: Nuclear receptor 2C2-associated protein (139 aa).

This sequence belongs to the NR2C2AP family. Interacts with NR2C2/TR4. Expressed in all tissues examined, with highest expression in heart, skeletal muscle and pancreas.

Its subcellular location is the nucleus. May act as a repressor of NR2C2-mediated transactivation by suppressing the binding between NR2C2/TR4 and the TR4-response element in target genes. In Homo sapiens (Human), this protein is Nuclear receptor 2C2-associated protein (NR2C2AP).